Reading from the N-terminus, the 445-residue chain is Probable fructoselysine/psicoselysine transporter FrlA (445 aa).

11 helical membrane passes run 10-32 (LGFW…FVSV), 39-61 (AGTP…PQMC), 97-119 (FWAN…LGFL), 126-143 (LGKF…LLHL), 153-175 (QTLI…IFWF), 188-210 (IGAT…SYTG), 230-252 (RALI…VISG), 272-294 (WIPA…VILG), 341-363 (GIFF…VMCF), 384-406 (LWRT…ILVA), and 411-433 (WAPI…AYAF).

This sequence belongs to the amino acid-polyamine-organocation (APC) superfamily.

Its subcellular location is the cell inner membrane. It catalyses the reaction N(6)-(D-fructosyl)-L-lysine(in) = N(6)-(D-fructosyl)-L-lysine(out). It carries out the reaction N(6)-(D-psicosyl)-L-lysine(in) = N(6)-(D-psicosyl)-L-lysine(out). It participates in carbohydrate metabolism; fructoselysine degradation. Functionally, is likely involved in the transport of fructoselysine and psicoselysine to the cytoplasm, where they are degraded. This is Probable fructoselysine/psicoselysine transporter FrlA (frlA) from Escherichia coli O157:H7.